The sequence spans 377 residues: Nitric oxide reductase FlRd-NAD(+) reductase (377 aa).

This sequence belongs to the FAD-dependent oxidoreductase family. It depends on FAD as a cofactor.

Its subcellular location is the cytoplasm. The enzyme catalyses 2 reduced [nitric oxide reductase rubredoxin domain] + NAD(+) + H(+) = 2 oxidized [nitric oxide reductase rubredoxin domain] + NADH. The protein operates within nitrogen metabolism; nitric oxide reduction. Functionally, one of at least two accessory proteins for anaerobic nitric oxide (NO) reductase. Reduces the rubredoxin moiety of NO reductase. The protein is Nitric oxide reductase FlRd-NAD(+) reductase of Salmonella dublin (strain CT_02021853).